The chain runs to 254 residues: MPAGSMSTTGYPGVCSTTSYRTHCYIPVTSSVTLSSSDLSPTFGHCLPSSYQGNLWLLDYCQESYGEAPTCKSPSCEPKTCSTTGCDPSNSSVPCNSPSAGQVFSVCETTNVSPSPSCSPSTQTNGYVCNCHIPTRNASKACQTLRNGSNCFGQLNCLSKSFQTLNHCRLSTLGYKSYQNPCFIPSYVSPLCYISNSCQPQSYLVRNYHYSSYRPTSCRPLSYLSRSFRSLSYIPSTFPPLRYLCSGSRPLKCY.

Repeat copies occupy residues 193-202 (YISNSCQPQS), 203-212 (YLVRNYHYSS), 213-222 (YRPTSCRPLS), 223-232 (YLSRSFRSLS), 233-242 (YIPSTFPPLR), and 243-252 (YLCSGSRPLK). Positions 193–252 (YISNSCQPQSYLVRNYHYSSYRPTSCRPLSYLSRSFRSLSYIPSTFPPLRYLCSGSRPLK) are 6 X 10 AA repeats of Y-[ILR]-[SVPC]-[NRTS]-[SNTG]-X-[QHRP]-[PSY]-[QSL]-[SRK].

This sequence belongs to the PMG family. As to quaternary structure, interacts with hair keratins. In terms of tissue distribution, specific expression in the middle/upper hair cuticle.

Functionally, in the hair cortex, hair keratin intermediate filaments are embedded in an interfilamentous matrix, consisting of hair keratin-associated proteins (KRTAP), which are essential for the formation of a rigid and resistant hair shaft through their extensive disulfide bond cross-linking with abundant cysteine residues of hair keratins. The matrix proteins include the high-sulfur and high-glycine-tyrosine keratins. This is Keratin-associated protein 24-1 (KRTAP24-1) from Homo sapiens (Human).